The sequence spans 232 residues: Chalcone synthase (232 aa).

Cysteine 7 is an active-site residue.

It belongs to the thiolase-like superfamily. Chalcone/stilbene synthases family.

It carries out the reaction (E)-4-coumaroyl-CoA + 3 malonyl-CoA + 3 H(+) = 2',4,4',6'-tetrahydroxychalcone + 3 CO2 + 4 CoA. The protein operates within secondary metabolite biosynthesis; flavonoid biosynthesis. Functionally, the primary product of this enzyme is 4,2',4',6'-tetrahydroxychalcone (also termed naringenin-chalcone or chalcone) which can under specific conditions spontaneously isomerize into naringenin. The chain is Chalcone synthase (CHS) from Malus domestica (Apple).